The primary structure comprises 115 residues: Nucleoid-associated protein NATL1_00191 (115 aa).

The segment at 89–115 (STSTMKERMEDLTGGFKLNLPGMGEES) is disordered.

This sequence belongs to the YbaB/EbfC family. Homodimer.

It localises to the cytoplasm. The protein localises to the nucleoid. In terms of biological role, binds to DNA and alters its conformation. May be involved in regulation of gene expression, nucleoid organization and DNA protection. The chain is Nucleoid-associated protein NATL1_00191 from Prochlorococcus marinus (strain NATL1A).